The following is a 123-amino-acid chain: NADH-quinone oxidoreductase subunit A (123 aa).

Transmembrane regions (helical) follow at residues 11–31, 68–88, and 93–113; these read YLPIAIFFGIAVLLSVLIMIL, LVAILFIIFDLEIAFLVPWAI, and IGKMGFFSMMFFLFVLIIGFI.

This sequence belongs to the complex I subunit 3 family. In terms of assembly, NDH-1 is composed of 14 different subunits. Subunits NuoA, H, J, K, L, M, N constitute the membrane sector of the complex.

The protein resides in the cell inner membrane. It carries out the reaction a quinone + NADH + 5 H(+)(in) = a quinol + NAD(+) + 4 H(+)(out). NDH-1 shuttles electrons from NADH, via FMN and iron-sulfur (Fe-S) centers, to quinones in the respiratory chain. The immediate electron acceptor for the enzyme in this species is believed to be ubiquinone. Couples the redox reaction to proton translocation (for every two electrons transferred, four hydrogen ions are translocated across the cytoplasmic membrane), and thus conserves the redox energy in a proton gradient. The polypeptide is NADH-quinone oxidoreductase subunit A (Rickettsia prowazekii (strain Madrid E)).